We begin with the raw amino-acid sequence, 280 residues long: NAD(+) hydrolase TirS (280 aa).

The stretch at 22–94 (MNKLPDEIDR…KINLQKEQSR (73 aa)) forms a coiled coil. One can recognise a TIR domain in the interval 141–275 (IEYDVFLSHS…EIVEKIYQVI (135 aa)). Residues 150-151 (SS) and glutamate 180 each bind NAD(+). Glutamate 216 is an active-site residue.

It localises to the secreted. It carries out the reaction NAD(+) + H2O = ADP-D-ribose + nicotinamide + H(+). The catalysed reaction is NADP(+) + H2O = ADP-D-ribose 2'-phosphate + nicotinamide + H(+). Virulence factor that suppresses host Toll-like receptor 2 (TLR2)-mediated NF-kappa-B signaling upon infection. NAD(+) hydrolase (NADase) that catalyzes cleavage of NAD(+) into ADP-D-ribose (ADPR) and nicotinamide. Also able to hydrolyze NADP(+), but not other NAD(+)-related molecules. Able to reduce NAD(+) levels in host cells. The protein is NAD(+) hydrolase TirS of Staphylococcus aureus (strain MSSA476).